The primary structure comprises 81 residues: Small ribosomal subunit protein bS16 (81 aa).

Belongs to the bacterial ribosomal protein bS16 family.

The polypeptide is Small ribosomal subunit protein bS16 (Clostridium beijerinckii (strain ATCC 51743 / NCIMB 8052) (Clostridium acetobutylicum)).